The following is a 511-amino-acid chain: MLLAELAQVSLEVAATSARSRKTALLAGLFRNAGPEDVPVVIPYLAGRLPQGRIGVGWRSLGEPVEPACDPTLTVTGVDAELTALAATSGPGSQARRRERLRTLFAAATADEQRFLRALLTGEVRQGALDAVAADALAHAAGAPPADVRRAVMLAGSLQDVATVLLADGPGALADFRLTVGRPVQPMLARSAASVGEALDKLGPCAVEEKLDGIRVQVHRDGERIRAYTRTLDDITDRLPELVSAVAALHARRFVLDGELIALGEDGRPRPFQETASRVGSRRDVAGAAAHVPVVPVFFDALRVDGEDLLDRPFADRHAALARLLPDDLRVRRTVVADPDAPEARAAADAFLAATLERGHEGVVVKDLAAAYSAGRRGASWLKVKPVHTLDLVVLAVERGSGRRTGKLSNLHLGARRPDGTFAMLGKTFKGLTDALLDWQTARLRELATDDDGHVVTVRPELVVEIAYDGLQRSTRYPAGVTLRFARVLRYREDKTAREADTVETVLSRQR.

Glu208 is an ATP binding site. Residue Lys210 is the N6-AMP-lysine intermediate of the active site. ATP contacts are provided by Arg215, Arg230, Glu259, Phe299, Arg377, and Lys383.

It belongs to the ATP-dependent DNA ligase family. Mg(2+) is required as a cofactor.

The catalysed reaction is ATP + (deoxyribonucleotide)n-3'-hydroxyl + 5'-phospho-(deoxyribonucleotide)m = (deoxyribonucleotide)n+m + AMP + diphosphate.. In terms of biological role, DNA ligase that seals nicks in double-stranded DNA during DNA replication, DNA recombination and DNA repair. The sequence is that of Probable DNA ligase from Streptomyces griseus subsp. griseus (strain JCM 4626 / CBS 651.72 / NBRC 13350 / KCC S-0626 / ISP 5235).